A 199-amino-acid chain; its full sequence is Recombination protein RecR (199 aa).

The C4-type zinc finger occupies 58–73; the sequence is CKTCGNIDTQSPCTVC. Residues 81-176 form the Toprim domain; sequence AMIVVVADVA…KVTRLAHGVP (96 aa).

It belongs to the RecR family.

Its function is as follows. May play a role in DNA repair. It seems to be involved in an RecBC-independent recombinational process of DNA repair. It may act with RecF and RecO. The polypeptide is Recombination protein RecR (Bradyrhizobium sp. (strain ORS 278)).